Consider the following 313-residue polypeptide: Pyrimidine-specific ribonucleoside hydrolase RihB (313 aa).

The active-site Proton acceptor is the D11. Positions 11, 16, and 124 each coordinate Ca(2+). 2 residues coordinate substrate: Q227 and H239. Position 240 (D240) interacts with Ca(2+).

The protein belongs to the IUNH family. RihB subfamily. In terms of assembly, homotetramer. Requires Ca(2+) as cofactor.

The enzyme catalyses a pyrimidine ribonucleoside + H2O = a pyrimidine nucleobase + D-ribose. Hydrolyzes cytidine or uridine to ribose and cytosine or uracil, respectively. Has a clear preference for cytidine over uridine. Strictly specific for ribonucleosides. The polypeptide is Pyrimidine-specific ribonucleoside hydrolase RihB (Escherichia coli (strain SMS-3-5 / SECEC)).